A 469-amino-acid chain; its full sequence is MAEFPFEISPMFEGERVRKEGMFVELGGPKSLGLELVRAADMDAIEDDKVTIIGPDLKDMEEGKTYPWAMIFNIGGELVEPDLESVVERRVHDFINYCQGIMHLNQRYDVWMRVSKDTAAKMDSFEPFGKAVMMLFKTELPFIEKMQVTFYTDKDEVEKQMETAKEIFKARDARTKDLHDEDVEVFYGCTLCQSFAPTNVCVVSPDRISLCGAINWFDGRAAAKVDPEGPQFEIAKGDLLDAVTGEYTGVNEIAKKLSSGEFDKIKLHSFFDSPHTSCGCFEVVGFYIPEVDGIGWVDREYQGMAPNGIGFSTMAGQTGGGKQIVGFLGIGVNYFYSPKFIQADGGWNRVVWLPSKLKEKIDEAIPADLKDKIATENDASDIESLKAFLQEKNHPVVATWAAAEEEEEEEEEEEEVAVAAAPMMMPAAGFQMPAMPMMSGGSSGGIKLTFKNAKITIDRMIISEKKEKK.

4 residues coordinate [Ni-Fe-S] cluster: C189, C192, C278, and C280.

This sequence belongs to the CdhC family. As to quaternary structure, monomer. The ACDS complex is made up of alpha, epsilon, beta, gamma and delta chains with a probable stoichiometry of (alpha(2)epsilon(2))(4)-beta(8)-(gamma(1)delta(1))(8) (Potential). It depends on [Ni-Fe-S] cluster as a cofactor.

It catalyses the reaction Co(I)-[corrinoid Fe-S protein] + acetyl-CoA + H(+) = methyl-Co(III)-[corrinoid Fe-S protein] + CO + CoA. It functions in the pathway one-carbon metabolism; methanogenesis from acetate. Part of a complex that catalyzes the reversible cleavage of acetyl-CoA, allowing growth on acetate as sole source of carbon and energy. The alpha-epsilon complex generates CO from CO(2), while the beta subunit (this protein) combines the CO with CoA and a methyl group to form acetyl-CoA. The methyl group, which is incorporated into acetyl-CoA, is transferred to the beta subunit by a corrinoid iron-sulfur protein (the gamma-delta complex). This is Acetyl-CoA decarbonylase/synthase complex subunit beta 1 (cdhC1) from Methanosarcina mazei (strain ATCC BAA-159 / DSM 3647 / Goe1 / Go1 / JCM 11833 / OCM 88) (Methanosarcina frisia).